Reading from the N-terminus, the 160-residue chain is Cyclic pyranopterin monophosphate synthase (160 aa).

Substrate is bound by residues 76–78 (LCH) and 114–115 (ME). The active site involves aspartate 129.

It belongs to the MoaC family. In terms of assembly, homohexamer; trimer of dimers.

It catalyses the reaction (8S)-3',8-cyclo-7,8-dihydroguanosine 5'-triphosphate = cyclic pyranopterin phosphate + diphosphate. The protein operates within cofactor biosynthesis; molybdopterin biosynthesis. Catalyzes the conversion of (8S)-3',8-cyclo-7,8-dihydroguanosine 5'-triphosphate to cyclic pyranopterin monophosphate (cPMP). The polypeptide is Cyclic pyranopterin monophosphate synthase (Mesorhizobium japonicum (strain LMG 29417 / CECT 9101 / MAFF 303099) (Mesorhizobium loti (strain MAFF 303099))).